The sequence spans 222 residues: Probable pyridoxal 5'-phosphate synthase subunit SNO3 (222 aa).

Residue 58–60 (GES) coordinates L-glutamine. Catalysis depends on cysteine 91, which acts as the Nucleophile. Residues arginine 120 and 151 to 152 (IR) contribute to the L-glutamine site. Residues histidine 197 and glutamate 199 each act as charge relay system in the active site.

It belongs to the glutaminase PdxT/SNO family.

The enzyme catalyses aldehydo-D-ribose 5-phosphate + D-glyceraldehyde 3-phosphate + L-glutamine = pyridoxal 5'-phosphate + L-glutamate + phosphate + 3 H2O + H(+). It catalyses the reaction L-glutamine + H2O = L-glutamate + NH4(+). It participates in cofactor biosynthesis; pyridoxal 5'-phosphate biosynthesis. Catalyzes the hydrolysis of glutamine to glutamate and ammonia as part of the biosynthesis of pyridoxal 5'-phosphate. The resulting ammonia molecule is channeled to the active site of a SNZ isoform. In Saccharomyces cerevisiae (strain ATCC 204508 / S288c) (Baker's yeast), this protein is Probable pyridoxal 5'-phosphate synthase subunit SNO3 (SNO3).